The following is a 170-amino-acid chain: Protein BofC (170 aa).

The first 30 residues, 1–30 (MKRFSTAYLLLGILCSAAVFLIGAPSRALG), serve as a signal peptide directing secretion.

In terms of assembly, monomer.

It is found in the forespore intermembrane space. Functionally, inhibits the SpoIVB zymogen from undergoing autocatalytic activation by an unknown mechanism, and in this way plays a role in the sigma-K checkpoint of sporulation. In Bacillus subtilis (strain 168), this protein is Protein BofC (bofC).